Reading from the N-terminus, the 306-residue chain is Ubiquitin-conjugating enzyme E2Q-like protein CG4502 (306 aa).

Residues 18–77 are disordered; it reads HKSSNNNNNNNNNHNNNINNNNNNDKVDGATGSSPNINNNNNNNNNNNNHDGAAAPSSAG. Low complexity-rich tracts occupy residues 22–41 and 53–77; these read NNNN…NNNN and NINN…SSAG. Residues 138–299 enclose the UBC core domain; that stretch reads IRTRRLMKEY…VKTHEKYGWV (162 aa). Cys-234 (glycyl thioester intermediate) is an active-site residue.

It belongs to the ubiquitin-conjugating enzyme family.

It catalyses the reaction S-ubiquitinyl-[E1 ubiquitin-activating enzyme]-L-cysteine + [E2 ubiquitin-conjugating enzyme]-L-cysteine = [E1 ubiquitin-activating enzyme]-L-cysteine + S-ubiquitinyl-[E2 ubiquitin-conjugating enzyme]-L-cysteine.. It participates in protein modification; protein ubiquitination. Its function is as follows. Catalyzes the covalent attachment of ubiquitin to other proteins. This is Ubiquitin-conjugating enzyme E2Q-like protein CG4502 from Drosophila melanogaster (Fruit fly).